Reading from the N-terminus, the 90-residue chain is MATSAAAVQDEPATRFAKDQLKAIIERIERLEEEKKTISDDIRDVYAEAKGNGYDVKALRTIVRMRKQDANERAEQETILETYMQALGML.

This sequence belongs to the UPF0335 family.

In Rhodopseudomonas palustris (strain BisB5), this protein is UPF0335 protein RPD_1405.